A 217-amino-acid polypeptide reads, in one-letter code: MSKTVRTLALGGLVLAGLSACVSVPRGQGSGAAVVDHVSDSARQAEAARQAWLQAHPHWSFQGRVAISKDRNGGSGRIDWQQDGPRYRVQLSAPVTRQSWVLTGDTTSGAGRLEGLEGGPRSGPDAEQVLLEATGWTIPVNQMPDWVRALRIAGAGAARVDLDAAGRPRTVQQDGWTIDFLAWTPASAEQPELPQRIEARSGEAKVRLLVDQWTVSP.

The first 20 residues, 1–20 (MSKTVRTLALGGLVLAGLSA), serve as a signal peptide directing secretion. A lipid anchor (N-palmitoyl cysteine) is attached at Cys21. Cys21 is lipidated: S-diacylglycerol cysteine. Residues 105-124 (DTTSGAGRLEGLEGGPRSGP) are disordered.

It belongs to the LolB family. In terms of assembly, monomer.

The protein resides in the cell outer membrane. Its function is as follows. Plays a critical role in the incorporation of lipoproteins in the outer membrane after they are released by the LolA protein. The protein is Outer-membrane lipoprotein LolB of Xanthomonas axonopodis pv. citri (strain 306).